A 170-amino-acid chain; its full sequence is Cathelicidin antimicrobial peptide (170 aa).

The N-terminal stretch at 1–30 is a signal peptide; that stretch reads MKTQRDGPSLGRWSLVLLLLGLTMPLAITA. A propeptide spans 31 to 131 (cathelin-like domain (CLD)); it reads QVLSYQEAVL…DISCDKDERK (101 aa). Disulfide bonds link Cys86–Cys97 and Cys108–Cys125. The tract at residues 150–162 is active core; the sequence is FKKIGQKINDFLG.

Belongs to the cathelicidin family. As to quaternary structure, monomer, homodimer or homotrimer (in vitro). Oligomerizes as tetra- or hexamer in solution (in vitro). In terms of processing, proteolytically cleaved by proteinase PRTN3 into antibacterial peptide LL-37. Proteolytically cleaved by cathepsin CTSG and neutrophil elastase ELANE. Post-translationally, resistant to proteolytic degradation in solution, and when bound to both zwitterionic (mimicking mammalian membranes) and negatively charged membranes (mimicking bacterial membranes). After secretion onto the skin surface, the CAMP gene product is processed by a serine protease-dependent mechanism into multiple novel antimicrobial peptides distinct from and shorter than cathelicidin LL-37. These peptides show enhanced antimicrobial action, acquiring the ability to kill skin pathogens such as S.aureus, E.coli and C.albicans. These peptides have lost the ability to stimulate CXCL8/IL8 release from keratinocytes. The peptides act synergistically, killing bacteria at lower concentrations when present together, and maintain activity at increased salt condition.

The protein resides in the secreted. It localises to the vesicle. In terms of biological role, antimicrobial protein that is an integral component of the innate immune system. Binds to bacterial lipopolysaccharides (LPS). Acts via neutrophil N-formyl peptide receptors to enhance the release of CXCL2. Postsecretory processing generates multiple cathelicidin antimicrobial peptides with various lengths which act as a topical antimicrobial defense in sweat on skin. The unprocessed precursor form, cathelicidin antimicrobial peptide, inhibits the growth of Gram-negative E.coli and E.aerogenes with efficiencies comparable to that of the mature peptide LL-37 (in vitro). Its function is as follows. Antimicrobial peptide that is an integral component of the innate immune system. Binds to bacterial lipopolysaccharides (LPS). Causes membrane permeabilization by forming transmembrane pores (in vitro). Causes lysis of E.coli. Exhibits antimicrobial activity against Gram-negative bacteria such as P.aeruginosa, S.typhimurium, E.aerogenes, E.coli and P.syringae, Gram-positive bacteria such as L.monocytogenes, S.epidermidis, S.pyogenes and S.aureus, as well as vancomycin-resistant enterococci (in vitro). Exhibits antimicrobial activity against methicillin-resistant S.aureus, P.mirabilis, and C.albicans in low-salt media, but not in media containing 100 mM NaCl (in vitro). Forms chiral supramolecular assemblies with quinolone signal (PQS) molecules of P.aeruginosa, which may lead to interference of bacterial quorum signaling and perturbance of bacterial biofilm formation. May form supramolecular fiber-like assemblies on bacterial membranes. Induces cytokine and chemokine producation as well as TNF/TNFA and CSF2/GMCSF production in normal human keratinocytes. Exhibits hemolytic activity against red blood cells. Functionally, exhibits antimicrobial activity against E.coli and B.megaterium (in vitro). This chain is Cathelicidin antimicrobial peptide, found in Cebus capucinus (White-faced sapajou).